The primary structure comprises 160 residues: Ureidoglycolate lyase (160 aa).

This sequence belongs to the ureidoglycolate lyase family. As to quaternary structure, homodimer. The cofactor is Ni(2+).

The catalysed reaction is (S)-ureidoglycolate = urea + glyoxylate. It functions in the pathway nitrogen metabolism; (S)-allantoin degradation. Functionally, catalyzes the catabolism of the allantoin degradation intermediate (S)-ureidoglycolate, generating urea and glyoxylate. Involved in the utilization of allantoin as nitrogen source. The protein is Ureidoglycolate lyase of Salmonella gallinarum (strain 287/91 / NCTC 13346).